A 349-amino-acid polypeptide reads, in one-letter code: MITSIELRNFRNLENYKVLINKPLVIIQGLNGVGKTSILESIYFAATTKSHRSSVEKDMIQYDKPYASVKLIEDSKLHEIVLTPNGKRTTINKSEVRKISDYIGQLRVVMFAPEDLMLIKGSPSERRYFLDMELMQVSKTYLRNLNSYKKILKQRNALLKKNRNLTDYTFLNILGEQLYDVGIQIFDERQKFIEALNQKFKTIQTKYKDFEVEMLYEPNVTKENFLKHLKTKQKQDIMYETTTAGIHKDDFKLLYKGLNAKDSASQGTSRLIVIELKLALLEWIKEVTKTDAILLLDDVLSELDLERQNLFMSQLSKNHQVFITTALPINGHIDFQKIVLQEGETINAK.

29 to 36 provides a ligand contact to ATP; sequence GLNGVGKT.

This sequence belongs to the RecF family.

It is found in the cytoplasm. In terms of biological role, the RecF protein is involved in DNA metabolism; it is required for DNA replication and normal SOS inducibility. RecF binds preferentially to single-stranded, linear DNA. It also seems to bind ATP. This chain is DNA replication and repair protein RecF, found in Acholeplasma laidlawii (strain PG-8A).